The chain runs to 442 residues: D-aminoacyl-tRNA deacylase (442 aa).

Belongs to the DtdA deacylase family. In terms of assembly, monomer. Zn(2+) serves as cofactor.

The catalysed reaction is a D-aminoacyl-tRNA + H2O = a tRNA + a D-alpha-amino acid + H(+). The enzyme catalyses glycyl-tRNA(Ala) + H2O = tRNA(Ala) + glycine + H(+). D-aminoacyl-tRNA deacylase with broad substrate specificity. By recycling D-aminoacyl-tRNA to D-amino acids and free tRNA molecules, this enzyme counteracts the toxicity associated with the formation of D-aminoacyl-tRNA entities in vivo. In Methanospirillum hungatei JF-1 (strain ATCC 27890 / DSM 864 / NBRC 100397 / JF-1), this protein is D-aminoacyl-tRNA deacylase.